A 310-amino-acid polypeptide reads, in one-letter code: Protoheme IX farnesyltransferase (310 aa).

9 helical membrane passes run 26 to 45 (VMSLVVFTALVGLLVAPVTV), 49 to 71 (IALTGILFIALGAGASGALNMWW), 95 to 115 (GEALGIGLALSGIAVVMLGLA), 118 to 138 (LFAAGLLAFTIFFYAVVYSMW), 147 to 167 (IVIGGAAGAFPPMIGWAVATG), 174 to 194 (LFMFALIFMWTPPHFWSLALF), 220 to 240 (VLVYSLLLAPLAVAGAFTGIG), 243 to 263 (LYLATALALNGWLLVGAVRIW), and 289 to 309 (LFLHFGAILAEAALKPYGLGG).

This sequence belongs to the UbiA prenyltransferase family. Protoheme IX farnesyltransferase subfamily. In terms of assembly, interacts with CtaA.

Its subcellular location is the cell inner membrane. It carries out the reaction heme b + (2E,6E)-farnesyl diphosphate + H2O = Fe(II)-heme o + diphosphate. The protein operates within porphyrin-containing compound metabolism; heme O biosynthesis; heme O from protoheme: step 1/1. Converts heme B (protoheme IX) to heme O by substitution of the vinyl group on carbon 2 of heme B porphyrin ring with a hydroxyethyl farnesyl side group. In Cereibacter sphaeroides (strain ATCC 17029 / ATH 2.4.9) (Rhodobacter sphaeroides), this protein is Protoheme IX farnesyltransferase.